The following is a 433-amino-acid chain: uncharacterized protein (433 aa).

An N-terminal signal peptide occupies residues 1 to 26; the sequence is MTRRAEFEMGLFVILQSMFLISLCSS. N-linked (GlcNAc...) asparagine glycosylation is found at Asn59, Asn72, Asn125, Asn159, Asn210, Asn275, Asn282, and Asn323. A lipid anchor (GPI-anchor amidated alanine) is attached at Ala405. A propeptide spans 406–433 (removed in mature form); the sequence is SSQPRLHDEGVTRLVIFVLSMLLVMLLS.

The protein localises to the cell membrane. This is an uncharacterized protein from Arabidopsis thaliana (Mouse-ear cress).